The primary structure comprises 86 residues: Putative membrane protein insertion efficiency factor (86 aa).

This sequence belongs to the UPF0161 family.

It localises to the cell inner membrane. In terms of biological role, could be involved in insertion of integral membrane proteins into the membrane. In Ruegeria sp. (strain TM1040) (Silicibacter sp.), this protein is Putative membrane protein insertion efficiency factor.